The following is a 152-amino-acid chain: Transcriptional regulator MraZ (152 aa).

SpoVT-AbrB domains follow at residues 5-52 and 81-124; these read AHAI…PLCE and ASEC…SETR.

Belongs to the MraZ family. As to quaternary structure, forms oligomers.

The protein localises to the cytoplasm. Its subcellular location is the nucleoid. The protein is Transcriptional regulator MraZ of Tolumonas auensis (strain DSM 9187 / NBRC 110442 / TA 4).